A 356-amino-acid chain; its full sequence is Protein-glutamate methylesterase/protein-glutamine glutaminase 4 (356 aa).

Positions 15-132 (RVLVVDDSAV…SVGEMTADLV (118 aa)) constitute a Response regulatory domain. Asp-66 bears the 4-aspartylphosphate mark. Residues 162–348 (ARTTLQVVAI…PLDRIAPEIL (187 aa)) enclose the CheB-type methylesterase domain. Active-site residues include Ser-174, His-200, and Asp-296.

It belongs to the CheB family. In terms of processing, phosphorylated by CheA. Phosphorylation of the N-terminal regulatory domain activates the methylesterase activity.

Its subcellular location is the cytoplasm. The catalysed reaction is [protein]-L-glutamate 5-O-methyl ester + H2O = L-glutamyl-[protein] + methanol + H(+). It catalyses the reaction L-glutaminyl-[protein] + H2O = L-glutamyl-[protein] + NH4(+). In terms of biological role, involved in chemotaxis. Part of a chemotaxis signal transduction system that modulates chemotaxis in response to various stimuli. Catalyzes the demethylation of specific methylglutamate residues introduced into the chemoreceptors (methyl-accepting chemotaxis proteins or MCP) by CheR. Also mediates the irreversible deamidation of specific glutamine residues to glutamic acid. The polypeptide is Protein-glutamate methylesterase/protein-glutamine glutaminase 4 (Anaeromyxobacter dehalogenans (strain 2CP-C)).